A 567-amino-acid polypeptide reads, in one-letter code: MDVSTNELAILAIVLLATGVLFYAKGTRRAPLPPGPRGIPFFGNLFQVDAMRPYPQYLKWAQKYGPVVSIKLGGQHVIVLNSSEAADELLVTRSKQYSSRESPHVAFDLVSDQQQMLFMPYGREWKIVRKNVHGLLGPGSSKQMRKMQDLESRVILHDLLCHGETSISEDFVEGPHGEVPERHWFSIIRRYTTSLMMTLMYGHRIHRIVDNPELHQVYAVVSNFTHVSQPGRYLVDVFPVLRRLPDIMAPWRAEGKKMHEWEMGFWGKLFSDSRTALLDGSGLDGFVQSYLRSRAEAGCEDLPGKGVTEDAAGWMRDKLVTYTASGIIEAGSDTTSTAMFSFVLLMLSNPDALQRAKEEMDAVVGSSRMPGWEDEDRLPWLKACIKETLRRAPPLPLGVPHKTEEDDVYNGRLIPKGSTVIGNIWAIHMDPIRYPNPTSFKPERFYHPDEKLDWASGPDTHDRDHYIFGWGRRFCSGKHIAEASLFIVLSRLIWGFDLYTGSDAKTGQARLPDVNDEATFTDGLVAAPKIYPVGFKPRSEKHAEMIKASYRDVQNDWQSMGLAGDER.

Residues 3 to 23 (VSTNELAILAIVLLATGVLFY) form a helical membrane-spanning segment. Asn-81 and Asn-223 each carry an N-linked (GlcNAc...) asparagine glycan. Cys-475 lines the heme pocket.

It belongs to the cytochrome P450 family. Heme serves as cofactor.

It is found in the membrane. Its pathway is secondary metabolite biosynthesis. In terms of biological role, cytochrome P450 monooxygenase that is able to use anthracene, carbazole, pyrene, and phenanthrene as substrates for oxidation. These multifunctional properties against a series of polycyclic aromatic hydrocarbons (PAHs) suggest that CYP231 would play important roles, at least in part, in fungal metabolic systems involved in xenobiotic detoxification. The protein is Cytochrome P450 monooxygenase 231 of Postia placenta (strain ATCC 44394 / Madison 698-R) (Brown rot fungus).